The chain runs to 370 residues: Pyruvate dehydrogenase E1 component subunit alpha (370 aa).

As to quaternary structure, heterodimer of an alpha and a beta chain. Thiamine diphosphate serves as cofactor.

The enzyme catalyses N(6)-[(R)-lipoyl]-L-lysyl-[protein] + pyruvate + H(+) = N(6)-[(R)-S(8)-acetyldihydrolipoyl]-L-lysyl-[protein] + CO2. Its function is as follows. The pyruvate dehydrogenase complex catalyzes the overall conversion of pyruvate to acetyl-CoA and CO(2). It contains multiple copies of three enzymatic components: pyruvate dehydrogenase (E1), dihydrolipoamide acetyltransferase (E2) and lipoamide dehydrogenase (E3). The protein is Pyruvate dehydrogenase E1 component subunit alpha (pdhA) of Staphylococcus epidermidis (strain ATCC 35984 / DSM 28319 / BCRC 17069 / CCUG 31568 / BM 3577 / RP62A).